The primary structure comprises 441 residues: Ribulose bisphosphate carboxylase large chain (441 aa).

The substrate site is built by asparagine 89 and threonine 139. Lysine 141 (proton acceptor) is an active-site residue. Lysine 143 lines the substrate pocket. Residues lysine 167, aspartate 169, and glutamate 170 each coordinate Mg(2+). N6-carboxylysine is present on lysine 167. The active-site Proton acceptor is the histidine 260. Positions 261, 293, and 345 each coordinate substrate.

This sequence belongs to the RuBisCO large chain family. Type I subfamily. In terms of assembly, heterohexadecamer of 8 large chains and 8 small chains; disulfide-linked. The disulfide link is formed within the large subunit homodimers. Requires Mg(2+) as cofactor. In terms of processing, the disulfide bond which can form in the large chain dimeric partners within the hexadecamer appears to be associated with oxidative stress and protein turnover.

Its subcellular location is the plastid. The protein localises to the chloroplast. It carries out the reaction 2 (2R)-3-phosphoglycerate + 2 H(+) = D-ribulose 1,5-bisphosphate + CO2 + H2O. The enzyme catalyses D-ribulose 1,5-bisphosphate + O2 = 2-phosphoglycolate + (2R)-3-phosphoglycerate + 2 H(+). Functionally, ruBisCO catalyzes two reactions: the carboxylation of D-ribulose 1,5-bisphosphate, the primary event in carbon dioxide fixation, as well as the oxidative fragmentation of the pentose substrate in the photorespiration process. Both reactions occur simultaneously and in competition at the same active site. In Polemonium reptans (Greek valerian), this protein is Ribulose bisphosphate carboxylase large chain.